The sequence spans 619 residues: Tyrosine-protein kinase ZAP-70 (619 aa).

The 93-residue stretch at 10 to 102 (FFYGSISRAE…GLPCNLRKPC (93 aa)) folds into the SH2 1 domain. The tract at residues 103-162 (NRPSGLEPQPGVFDCLRDAMVRDYVRQTWKLEGEALEQAIISQAPQVEKLIATTAHERMP) is interdomain A. The SH2 2 domain maps to 163 to 254 (WYHSSLTREE…GLIYCLKEAC (92 aa)). At Y248 the chain carries Phosphotyrosine. The interdomain B stretch occupies residues 255-337 (PNSSASNASG…KKLFLKRDNL (83 aa)). A disordered region spans residues 260–309 (SNASGAAAPTLPAHPSTLTHPQRRIDTLNSDGYTPEPARITSPDKPRPMP). Residue S289 is modified to Phosphoserine. Y292 bears the Phosphotyrosine mark. Y315 bears the Phosphotyrosine; by LCK mark. Y319 carries the phosphotyrosine modification. The Protein kinase domain maps to 338-600 (LIADIELGCG…QRMRACYYSL (263 aa)). Residues 345 to 352 (GCGNFGSV) and K369 contribute to the ATP site. Catalysis depends on D461, which acts as the Proton acceptor. 2 positions are modified to phosphotyrosine: Y492 and Y493. Residue K544 forms a Glycyl lysine isopeptide (Lys-Gly) (interchain with G-Cter in ubiquitin) linkage. N6-acetyllysine is present on K603.

The protein belongs to the protein kinase superfamily. Tyr protein kinase family. SYK/ZAP-70 subfamily. As to quaternary structure, interacts with CD247/CD3Z; this interaction docks ZAP70 at the stimulated TCR. Interacts with NFAM1. Interacts with adapter protein SLA; this interaction negatively regulates T-cell receptor signaling. Interacts with FCRL3. Interacts with VAV1. Interacts with CBL; this interaction promotes ubiquitination, internalization and subsequent degradation of CD247/CD3Z. Identified in a complex with CBL and UBE2L3. Interacts with SHB. Interacts with adapter protein SLA2; this interaction negatively regulates T-cell receptor signaling. Interacts with CBLB. Interacts (via SH2 domains) with RHOH; this interaction regulates ZAP70 subcellular localization. Interacts with DEF6. Interacts (ubiquitinated form) with OTUD7B and UBASH3B. Phosphorylated on tyrosine residues upon T-cell antigen receptor (TCR) stimulation. Phosphorylation of Tyr-315 and Tyr-319 are essential for ZAP70 positive function on T-lymphocyte activation whereas Tyr-292 has a negative regulatory role. Within the C-terminal kinase domain, Tyr-492 and Tyr-493 are phosphorylated after TCR induction, Tyr-492 playing a negative regulatory role and Tyr-493 a positive. Tyr-493 is dephosphorylated by PTN22. In terms of processing, ubiquitinated in response to T cell activation. Deubiquitinated by OTUD7B. As to expression, expressed in T- and natural killer cells. Also present in early thymocytes and pro/pre B-cells.

It localises to the cytoplasm. The protein localises to the cell membrane. The enzyme catalyses L-tyrosyl-[protein] + ATP = O-phospho-L-tyrosyl-[protein] + ADP + H(+). Its activity is regulated as follows. Activated by phosphorylation at Tyr-493 in the activation loop. Inhibited by staurosporine. Tyrosine kinase that plays an essential role in regulation of the adaptive immune response. Regulates motility, adhesion and cytokine expression of mature T-cells, as well as thymocyte development. Also contributes to the development and activation of primary B-lymphocytes. When antigen presenting cells (APC) activate T-cell receptor (TCR), a serie of phosphorylations lead to the recruitment of ZAP70 to the doubly phosphorylated TCR component CD247/CD3Z through ITAM motif at the plasma membrane. This recruitment serves to localization to the stimulated TCR and to relieve its autoinhibited conformation. Release of ZAP70 active conformation is further stabilized by phosphorylation mediated by LCK. Subsequently, ZAP70 phosphorylates at least 2 essential adapter proteins: LAT and LCP2. In turn, a large number of signaling molecules are recruited and ultimately lead to lymphokine production, T-cell proliferation and differentiation. Furthermore, ZAP70 controls cytoskeleton modifications, adhesion and mobility of T-lymphocytes, thus ensuring correct delivery of effectors to the APC. ZAP70 is also required for TCR-CD247/CD3Z internalization and degradation through interaction with the E3 ubiquitin-protein ligase CBL and adapter proteins SLA and SLA2. Thus, ZAP70 regulates both T-cell activation switch on and switch off by modulating TCR expression at the T-cell surface. During thymocyte development, ZAP70 promotes survival and cell-cycle progression of developing thymocytes before positive selection (when cells are still CD4/CD8 double negative). Additionally, ZAP70-dependent signaling pathway may also contribute to primary B-cells formation and activation through B-cell receptor (BCR). The protein is Tyrosine-protein kinase ZAP-70 (ZAP70) of Homo sapiens (Human).